A 323-amino-acid chain; its full sequence is Probable cell division protein WhiA (323 aa).

The H-T-H motif DNA-binding region spans 275–309 (TLKELGEMLTTGQVSKSGINHRLRKLDQIAERLRS).

It belongs to the WhiA family.

Its function is as follows. Involved in cell division and chromosome segregation. The polypeptide is Probable cell division protein WhiA (Listeria welshimeri serovar 6b (strain ATCC 35897 / DSM 20650 / CCUG 15529 / CIP 8149 / NCTC 11857 / SLCC 5334 / V8)).